We begin with the raw amino-acid sequence, 319 residues long: MQDQRNLLVFSGNANKPLAQSICKELGVRMGKALVTRFSDGEVQVEIEESVRRQEVFVIQPTCAPSAENLMELLVLIDALKRASAASVTAVIPYFGYSRQDRRMRSSRVPITAKVAAKMICAMEADRVLTVDLHADQIQGFFDVPIDNVYASPLLLADIWRAYGTDNLIVVSPDVGGVVRARAVAKRLDDADLAIIDKRRPRANVATVMNIIGDVQGKTCVLVDDLVDTAGTLCAAAAALKQRGALKVVAYITHPVLSGPAVDNINNSQLDELVVTDTIPLSAAARTCPKIRQLSVAELLAETIHRIAFGESVSSLYVD.

Residues 40–42 (DGE) and 99–100 (RQ) contribute to the ATP site. Residues histidine 134 and aspartate 174 each contribute to the Mg(2+) site. Residue lysine 198 is part of the active site. D-ribose 5-phosphate-binding positions include arginine 200, aspartate 224, and 228-232 (DTAGT).

Belongs to the ribose-phosphate pyrophosphokinase family. Class I subfamily. Homohexamer. The cofactor is Mg(2+).

The protein localises to the cytoplasm. The catalysed reaction is D-ribose 5-phosphate + ATP = 5-phospho-alpha-D-ribose 1-diphosphate + AMP + H(+). It functions in the pathway metabolic intermediate biosynthesis; 5-phospho-alpha-D-ribose 1-diphosphate biosynthesis; 5-phospho-alpha-D-ribose 1-diphosphate from D-ribose 5-phosphate (route I): step 1/1. Functionally, involved in the biosynthesis of the central metabolite phospho-alpha-D-ribosyl-1-pyrophosphate (PRPP) via the transfer of pyrophosphoryl group from ATP to 1-hydroxyl of ribose-5-phosphate (Rib-5-P). The sequence is that of Ribose-phosphate pyrophosphokinase from Xanthomonas campestris pv. campestris (strain ATCC 33913 / DSM 3586 / NCPPB 528 / LMG 568 / P 25).